The primary structure comprises 691 residues: Elongation factor G (691 aa).

Residues 8-282 (ERVRNIGIAA…AVVDYLPAPI (275 aa)) enclose the tr-type G domain. GTP is bound by residues 17 to 24 (AHIDAGKT), 81 to 85 (DTPGH), and 135 to 138 (NKMD).

It belongs to the TRAFAC class translation factor GTPase superfamily. Classic translation factor GTPase family. EF-G/EF-2 subfamily.

Its subcellular location is the cytoplasm. Its function is as follows. Catalyzes the GTP-dependent ribosomal translocation step during translation elongation. During this step, the ribosome changes from the pre-translocational (PRE) to the post-translocational (POST) state as the newly formed A-site-bound peptidyl-tRNA and P-site-bound deacylated tRNA move to the P and E sites, respectively. Catalyzes the coordinated movement of the two tRNA molecules, the mRNA and conformational changes in the ribosome. The polypeptide is Elongation factor G (Synechococcus sp. (strain CC9902)).